The chain runs to 280 residues: Pantothenate synthetase (280 aa).

30–37 is a binding site for ATP; that stretch reads MGALHEGH. Catalysis depends on histidine 37, which acts as the Proton donor. Residue glutamine 61 coordinates (R)-pantoate. A beta-alanine-binding site is contributed by glutamine 61. 147–150 is an ATP binding site; it reads GQKD. Glutamine 153 is a (R)-pantoate binding site. ATP is bound by residues valine 176 and 184 to 187; that span reads MSSR.

The protein belongs to the pantothenate synthetase family. As to quaternary structure, homodimer.

The protein localises to the cytoplasm. The enzyme catalyses (R)-pantoate + beta-alanine + ATP = (R)-pantothenate + AMP + diphosphate + H(+). The protein operates within cofactor biosynthesis; (R)-pantothenate biosynthesis; (R)-pantothenate from (R)-pantoate and beta-alanine: step 1/1. Catalyzes the condensation of pantoate with beta-alanine in an ATP-dependent reaction via a pantoyl-adenylate intermediate. In Thermodesulfovibrio yellowstonii (strain ATCC 51303 / DSM 11347 / YP87), this protein is Pantothenate synthetase.